A 263-amino-acid polypeptide reads, in one-letter code: Proliferating cell nuclear antigen (263 aa).

Residues 61 to 80 (RCDRTINLGLSLANMSKALK) mediate DNA binding.

Belongs to the PCNA family. As to quaternary structure, homotrimer. Forms a complex with activator 1 heteropentamer in the presence of ATP.

The protein localises to the nucleus. This protein is an auxiliary protein of DNA polymerase delta and is involved in the control of eukaryotic DNA replication by increasing the polymerase's processibility during elongation of the leading strand. The protein is Proliferating cell nuclear antigen (pcn-1) of Caenorhabditis elegans.